The chain runs to 545 residues: Glucans biosynthesis protein G (545 aa).

The first 34 residues, 1–34, serve as a signal peptide directing secretion; that stretch reads MVSLLRCQSFKPSSSLICSLALSAAFALSSSAFA. The segment at 38–60 is disordered; it reads KPAENKPATPVVSPPKATAQPAN.

Belongs to the OpgD/OpgG family.

It localises to the periplasm. It functions in the pathway glycan metabolism; osmoregulated periplasmic glucan (OPG) biosynthesis. Involved in the biosynthesis of osmoregulated periplasmic glucans (OPGs). The polypeptide is Glucans biosynthesis protein G (Shewanella sp. (strain ANA-3)).